Reading from the N-terminus, the 110-residue chain is UPF0060 membrane protein BTH_I2792 (110 aa).

4 helical membrane-spanning segments follow: residues 9–29 (ALFV…WLVL), 34–54 (PVWL…LLTL), 64–84 (AAYG…VDGV), and 86–106 (LSRW…VIAL).

Belongs to the UPF0060 family.

The protein localises to the cell inner membrane. In Burkholderia thailandensis (strain ATCC 700388 / DSM 13276 / CCUG 48851 / CIP 106301 / E264), this protein is UPF0060 membrane protein BTH_I2792.